The following is a 322-amino-acid chain: Methionyl-tRNA formyltransferase (322 aa).

A (6S)-5,6,7,8-tetrahydrofolate-binding site is contributed by 112–115; the sequence is SLLP.

Belongs to the Fmt family.

It catalyses the reaction L-methionyl-tRNA(fMet) + (6R)-10-formyltetrahydrofolate = N-formyl-L-methionyl-tRNA(fMet) + (6S)-5,6,7,8-tetrahydrofolate + H(+). Attaches a formyl group to the free amino group of methionyl-tRNA(fMet). The formyl group appears to play a dual role in the initiator identity of N-formylmethionyl-tRNA by promoting its recognition by IF2 and preventing the misappropriation of this tRNA by the elongation apparatus. The chain is Methionyl-tRNA formyltransferase from Synechococcus sp. (strain JA-3-3Ab) (Cyanobacteria bacterium Yellowstone A-Prime).